Reading from the N-terminus, the 134-residue chain is Large ribosomal subunit protein eL28 (134 aa).

Serine 60 carries the post-translational modification Phosphoserine.

Belongs to the eukaryotic ribosomal protein eL28 family. In terms of assembly, component of the large ribosomal subunit (LSU). Mature yeast ribosomes consist of a small (40S) and a large (60S) subunit. The 40S small subunit contains 1 molecule of ribosomal RNA (18S rRNA) and at least 33 different proteins. The large 60S subunit contains 3 rRNA molecules (25S, 5.8S and 5S rRNA) and at least 46 different proteins.

It is found in the cytoplasm. Component of the ribosome, a large ribonucleoprotein complex responsible for the synthesis of proteins in the cell. The small ribosomal subunit (SSU) binds messenger RNAs (mRNAs) and translates the encoded message by selecting cognate aminoacyl-transfer RNA (tRNA) molecules. The large subunit (LSU) contains the ribosomal catalytic site termed the peptidyl transferase center (PTC), which catalyzes the formation of peptide bonds, thereby polymerizing the amino acids delivered by tRNAs into a polypeptide chain. The nascent polypeptides leave the ribosome through a tunnel in the LSU and interact with protein factors that function in enzymatic processing, targeting, and the membrane insertion of nascent chains at the exit of the ribosomal tunnel. The polypeptide is Large ribosomal subunit protein eL28 (rpl44) (Schizosaccharomyces pombe (strain 972 / ATCC 24843) (Fission yeast)).